The following is a 502-amino-acid chain: Neuronal acetylcholine receptor subunit alpha-7 (502 aa).

Positions 1–22 (MRCSPGGVWLALAASLLHVSLQ) are cleaved as a signal peptide. The Extracellular portion of the chain corresponds to 23 to 233 (GEFQRKLYKE…VTMRRRTLYY (211 aa)). Residues Arg42 and Val44 each coordinate Ca(2+). Residues Asn46, Asn90, and Asn133 are each glycosylated (N-linked (GlcNAc...) asparagine). Cysteines 150 and 164 form a disulfide. Residues Ser172 and Tyr210 each contribute to the Ca(2+) site. Cys212 and Cys213 are joined by a disulfide. 3 helical membrane passes run 234–254 (GLNLLIPCVLISALALLVFLL), 259–279 (GEKISLGITVLLSLTVFMLLV), and 292–315 (LIAQYFASTMIIVGLSVVVTVIVL). The essential for TMEM35A/NACHO-mediated proper subunit assembly and trafficking to cell membrane stretch occupies residues 260 to 267 (EKISLGIT). Over 316–466 (QYHHHDPDGG…CSEWKFAACV (151 aa)) the chain is Cytoplasmic. The chain crosses the membrane as a helical span at residues 467–489 (VDRLCLMAFSVFTIICTIGILMS).

It belongs to the ligand-gated ion channel (TC 1.A.9) family. Acetylcholine receptor (TC 1.A.9.1) subfamily. Alpha-7/CHRNA7 sub-subfamily. As to quaternary structure, homopentamer. Can also form heteropentamers with CHRNB2, mainly found in basal forebrain cholinergic neurons. Interacts with RIC3; which is required for proper folding and assembly. Interacts with LYPD6. Interacts with CANX. Glycosylations at Asn-46, Asn-90 and Asn-133 are essential for TMEM35A/NACHO-mediated proper subunit assembly and trafficking to the cell membrane. In terms of tissue distribution, expressed in neuronal cells. Expressed in macrophages (at protein level).

The protein resides in the postsynaptic cell membrane. It localises to the cell membrane. The catalysed reaction is Ca(2+)(in) = Ca(2+)(out). It carries out the reaction K(+)(in) = K(+)(out). The enzyme catalyses Na(+)(in) = Na(+)(out). It catalyses the reaction choline(out) = choline(in). The catalysed reaction is NH4(+)(in) = NH4(+)(out). It carries out the reaction L-arginine(in) = L-arginine(out). The enzyme catalyses guanidine(out) = guanidine(in). Its activity is regulated as follows. Activated by a myriad of ligands such as acetylcholine, cytisine, nicotine, choline and epibatidine. Oligomeric amyloid-beta protein 42 activates specifially CHRNA7:CHRNB2 nAchRs. Activity is modulated by positive allosteric modulators (PAMs), such as flavonoids, with a wide range of chemical diversity, pharmacological sensitivity and efficacy. AChR activity is inhibited by the antagonists alpha-conotoxons RgIA, ImI and ImII, small disulfide-constrained peptides from cone snails. Alpha-conotoxin PnIC selectively inhibits CHRNA7:CHRNB2 over CHRNA7 homopentamer. In terms of biological role, component of neuronal acetylcholine receptors (nAChRs) that function as pentameric, ligand-gated cation channels with high calcium permeability among other activities. nAChRs are excitatory neurotrasnmitter receptors formed by a collection of nAChR subunits known to mediate synaptic transmission in the nervous system and the neuromuscular junction. Each nAchR subunit confers differential attributes to channel properties, including activation, deactivation and desensitization kinetics, pH sensitivity, cation permeability, and binding to allosteric modulators. CHRNA7 forms homopentameric neuronal acetylcholine receptors abundantly expressed in the central nervous system, characterized by fast desensitization and high calcium permeability. Also forms heteropentamers with CHRNB2, mainly expressed in basal forebrain cholinergic neurons. Involved in the modulation of calcium-dependent signaling pathways and influences the release of neurotransmitters, including dopamine, glutamate and GABA. Also expressed in non-neuronal cells such as immune cells like lymphocytes, monocytes and macrophages. In T cells, activation induces metabotropic signaling that results in an increase of intracellular Ca2+ concentrations, independent of ionotropic receptor functions. In macrophages, required for acetylcholine-mediated inhibition of TNF and other inflammatory cytokine release. Once activated by acetylcholine, nicotine or other agonists, selectively inhibits production of pro-inflammatory cytokines while leaving anti-inflammatory cytokines undisturbed. Stimulates the cholinergic anti-inflammatory pathway, controlling inflammation by inhibiting NFKB nuclear translocation and activating the JAK2-STAT3 pathway, independently of ion channel activity. Also expressed in the urothelium where it modulates reflex bladder activity by increasing intracellular calcium through internal stores and decreasing basal ATP release. This is Neuronal acetylcholine receptor subunit alpha-7 from Homo sapiens (Human).